The following is a 398-amino-acid chain: CCA-adding enzyme (398 aa).

ATP is bound by residues glycine 32 and arginine 35. Residues glycine 32 and arginine 35 each contribute to the CTP site. Positions 45 and 47 each coordinate Mg(2+). Arginine 119, aspartate 162, arginine 165, arginine 168, and arginine 171 together coordinate ATP. CTP is bound by residues arginine 119, aspartate 162, arginine 165, arginine 168, and arginine 171.

Belongs to the tRNA nucleotidyltransferase/poly(A) polymerase family. Bacterial CCA-adding enzyme type 3 subfamily. In terms of assembly, homodimer. Requires Mg(2+) as cofactor.

It catalyses the reaction a tRNA precursor + 2 CTP + ATP = a tRNA with a 3' CCA end + 3 diphosphate. The catalysed reaction is a tRNA with a 3' CCA end + 2 CTP + ATP = a tRNA with a 3' CCACCA end + 3 diphosphate. Its function is as follows. Catalyzes the addition and repair of the essential 3'-terminal CCA sequence in tRNAs without using a nucleic acid template. Adds these three nucleotides in the order of C, C, and A to the tRNA nucleotide-73, using CTP and ATP as substrates and producing inorganic pyrophosphate. tRNA 3'-terminal CCA addition is required both for tRNA processing and repair. Also involved in tRNA surveillance by mediating tandem CCA addition to generate a CCACCA at the 3' terminus of unstable tRNAs. While stable tRNAs receive only 3'-terminal CCA, unstable tRNAs are marked with CCACCA and rapidly degraded. This chain is CCA-adding enzyme, found in Lactococcus lactis subsp. lactis (strain IL1403) (Streptococcus lactis).